A 380-amino-acid polypeptide reads, in one-letter code: Queuine tRNA-ribosyltransferase (380 aa).

Aspartate 96 serves as the catalytic Proton acceptor. Substrate is bound by residues 96-100 (DSGGF), aspartate 150, glutamine 193, and glycine 220. Positions 251–257 (GVGAPDS) are RNA binding. The Nucleophile role is filled by aspartate 270. Residues 275–279 (TRIAR) form an RNA binding; important for wobble base 34 recognition region. Cysteine 308, cysteine 310, cysteine 313, and histidine 339 together coordinate Zn(2+).

It belongs to the queuine tRNA-ribosyltransferase family. In terms of assembly, homodimer. Within each dimer, one monomer is responsible for RNA recognition and catalysis, while the other monomer binds to the replacement base PreQ1. Zn(2+) is required as a cofactor.

It carries out the reaction 7-aminomethyl-7-carbaguanine + guanosine(34) in tRNA = 7-aminomethyl-7-carbaguanosine(34) in tRNA + guanine. It functions in the pathway tRNA modification; tRNA-queuosine biosynthesis. Catalyzes the base-exchange of a guanine (G) residue with the queuine precursor 7-aminomethyl-7-deazaguanine (PreQ1) at position 34 (anticodon wobble position) in tRNAs with GU(N) anticodons (tRNA-Asp, -Asn, -His and -Tyr). Catalysis occurs through a double-displacement mechanism. The nucleophile active site attacks the C1' of nucleotide 34 to detach the guanine base from the RNA, forming a covalent enzyme-RNA intermediate. The proton acceptor active site deprotonates the incoming PreQ1, allowing a nucleophilic attack on the C1' of the ribose to form the product. After dissociation, two additional enzymatic reactions on the tRNA convert PreQ1 to queuine (Q), resulting in the hypermodified nucleoside queuosine (7-(((4,5-cis-dihydroxy-2-cyclopenten-1-yl)amino)methyl)-7-deazaguanosine). The protein is Queuine tRNA-ribosyltransferase of Streptococcus pyogenes serotype M6 (strain ATCC BAA-946 / MGAS10394).